Consider the following 154-residue polypeptide: SsrA-binding protein (154 aa).

This sequence belongs to the SmpB family.

The protein localises to the cytoplasm. Required for rescue of stalled ribosomes mediated by trans-translation. Binds to transfer-messenger RNA (tmRNA), required for stable association of tmRNA with ribosomes. tmRNA and SmpB together mimic tRNA shape, replacing the anticodon stem-loop with SmpB. tmRNA is encoded by the ssrA gene; the 2 termini fold to resemble tRNA(Ala) and it encodes a 'tag peptide', a short internal open reading frame. During trans-translation Ala-aminoacylated tmRNA acts like a tRNA, entering the A-site of stalled ribosomes, displacing the stalled mRNA. The ribosome then switches to translate the ORF on the tmRNA; the nascent peptide is terminated with the 'tag peptide' encoded by the tmRNA and targeted for degradation. The ribosome is freed to recommence translation, which seems to be the essential function of trans-translation. The sequence is that of SsrA-binding protein from Synechococcus sp. (strain JA-3-3Ab) (Cyanobacteria bacterium Yellowstone A-Prime).